Reading from the N-terminus, the 528-residue chain is (R)-citramalate synthase (528 aa).

The Pyruvate carboxyltransferase domain maps to 5–271; it reads VYIYDTTLRD…IPQENLKKLT (267 aa).

Belongs to the alpha-IPM synthase/homocitrate synthase family.

The catalysed reaction is pyruvate + acetyl-CoA + H2O = (3R)-citramalate + CoA + H(+). It participates in amino-acid biosynthesis; L-isoleucine biosynthesis; 2-oxobutanoate from pyruvate: step 1/3. Its function is as follows. Catalyzes the condensation of pyruvate and acetyl-coenzyme A to form (R)-citramalate. This Aquifex aeolicus (strain VF5) protein is (R)-citramalate synthase.